The following is a 321-amino-acid chain: Chemotaxis protein CheV1 (321 aa).

Residues 19–177 form the CheW-like domain; the sequence is ELQLLCFRLG…IEKMLIDVFP (159 aa). The Response regulatory domain maps to 198–319; it reads CVLLADDSPS…IQRVVKQFLE (122 aa). Position 252 is a 4-aspartylphosphate (Asp252).

In terms of biological role, plays an essential role in chemotaxis signal transduction system in order to colonize the host stomach. May act as a phosphate sink to control the flow of phosphate to CheAY. The protein is Chemotaxis protein CheV1 of Helicobacter pylori (strain ATCC 700392 / 26695) (Campylobacter pylori).